A 66-amino-acid polypeptide reads, in one-letter code: Large ribosomal subunit protein bL35 (66 aa).

The segment covering 24–43 (HKKAGKRHNLSKKSKARKRR) has biased composition (basic residues). The interval 24–44 (HKKAGKRHNLSKKSKARKRRL) is disordered.

This sequence belongs to the bacterial ribosomal protein bL35 family.

The chain is Large ribosomal subunit protein bL35 from Dictyoglomus thermophilum (strain ATCC 35947 / DSM 3960 / H-6-12).